A 949-amino-acid polypeptide reads, in one-letter code: Glycine dehydrogenase (decarboxylating) (949 aa).

Lys704 is subject to N6-(pyridoxal phosphate)lysine.

Belongs to the GcvP family. The glycine cleavage system is composed of four proteins: P, T, L and H. It depends on pyridoxal 5'-phosphate as a cofactor.

It carries out the reaction N(6)-[(R)-lipoyl]-L-lysyl-[glycine-cleavage complex H protein] + glycine + H(+) = N(6)-[(R)-S(8)-aminomethyldihydrolipoyl]-L-lysyl-[glycine-cleavage complex H protein] + CO2. Its function is as follows. The glycine cleavage system catalyzes the degradation of glycine. The P protein binds the alpha-amino group of glycine through its pyridoxal phosphate cofactor; CO(2) is released and the remaining methylamine moiety is then transferred to the lipoamide cofactor of the H protein. The protein is Glycine dehydrogenase (decarboxylating) of Bacteroides fragilis (strain ATCC 25285 / DSM 2151 / CCUG 4856 / JCM 11019 / LMG 10263 / NCTC 9343 / Onslow / VPI 2553 / EN-2).